The chain runs to 738 residues: Ethylene receptor 1 (738 aa).

3 helical membrane passes run 23–43 (ISDF…IYFV), 53–73 (WVLV…LINL), and 92–112 (VLTA…IPDL). Cu cation-binding residues include C65 and H69. A GAF domain is found at 158–307 (DRHTILKTTL…VVADQVAVAL (150 aa)). The 236-residue stretch at 350 to 585 (VMNHEMRTPM…IFDVKLGISE (236 aa)) folds into the Histidine kinase domain. H353 is modified (phosphohistidine; by autocatalysis). ADP-binding positions include 470–473 (NAVK), D513, K529, S544, and L548. The Response regulatory domain maps to 611–729 (KVLVMDENGV…NIRDVLSDLL (119 aa)). The residue at position 659 (D659) is a 4-aspartylphosphate. Residue K714 forms a Glycyl lysine isopeptide (Lys-Gly) (interchain with G-Cter in ubiquitin) linkage.

The protein belongs to the ethylene receptor family. Homodimer; disulfide-linked. Heteromer with ERS1, ERS2, ETR2 and EIN4. Interacts with AHP1, AHP2 and AHP3. Interacts with RTE1. Interacts with EIN2. Cu cation serves as cofactor. Autophosphorylated. Phosphorylation at His-353 modulates the interaction with EIN2. As to expression, leaves, roots, stems, seedlings, flowers, anthers, carpels and ovules.

It localises to the endoplasmic reticulum membrane. The catalysed reaction is ATP + protein L-histidine = ADP + protein N-phospho-L-histidine.. In terms of biological role, ethylene receptor related to bacterial two-component regulators. Acts as a redundant negative regulator of ethylene signaling. In the presence of ethylene, the auto-kinase activity of ETR1 is inhibited and the non-phosphorylated kinase domain binds tightly to the corresponding domain of EIN2. The protein is Ethylene receptor 1 of Arabidopsis thaliana (Mouse-ear cress).